We begin with the raw amino-acid sequence, 250 residues long: ATP synthase subunit a (250 aa).

The next 6 membrane-spanning stretches (helical) occupy residues 25–45, 84–104, 115–135, 141–161, 187–209, and 223–243; these read VSFTNSAAFMVGIVALIFFFL, VFFPLVFSLFVFVFVANVIGL, IVVTAALALLVIGTVVIYGFY, FLHLFVPSGVPAFLLPFIVLI, ALKVFAFFVVGLGSAGFLGWLGA, and ELLVAILQAYVFAVLTSIYLN.

This sequence belongs to the ATPase A chain family. F-type ATPases have 2 components, CF(1) - the catalytic core - and CF(0) - the membrane proton channel. CF(1) has five subunits: alpha(3), beta(3), gamma(1), delta(1), epsilon(1). CF(0) has three main subunits: a(1), b(2) and c(9-12). The alpha and beta chains form an alternating ring which encloses part of the gamma chain. CF(1) is attached to CF(0) by a central stalk formed by the gamma and epsilon chains, while a peripheral stalk is formed by the delta and b chains.

The protein localises to the cell inner membrane. Its function is as follows. Key component of the proton channel; it plays a direct role in the translocation of protons across the membrane. This chain is ATP synthase subunit a, found in Azorhizobium caulinodans (strain ATCC 43989 / DSM 5975 / JCM 20966 / LMG 6465 / NBRC 14845 / NCIMB 13405 / ORS 571).